A 59-amino-acid chain; its full sequence is UPF0434 protein Pnec_0311 (59 aa).

Belongs to the UPF0434 family.

The chain is UPF0434 protein Pnec_0311 from Polynucleobacter necessarius subsp. necessarius (strain STIR1).